Here is a 476-residue protein sequence, read N- to C-terminus: MARMADSKLVAAAPRPGRVAGSFRDPSGQVFHFQDRILRTMDSAAAIEFASAERVMRQLVDEGRLVDFSDAEPSLHQLFQGSIARVLQHPLLEQITYPYEWSFAGLKAAALFHLQLQLDLLDQGFCLSDATAYNVQFEGSRPTFIDHLSIKPYRDGQLWYGHKQFCEQFLVPLLLRSVFDITHHSWYRGNLEGVPSADFVKLLSTRHWFSHKLFMHIILPAKLQSSRTSQTKVDLGDSRARRLPKDAFRAMLAQLYSWISGLKVDVGKQSVWQGYAANNTYTATQRSDKGQYVAEFVAQHKPRTIIDLGCNTGDFSYVALENGAEKAIGFDFDPHALDAAFDRSVQTSKNFLPLYLDARNPSPSQGWGERERQGFSSRFSADAVLALAFEHHLAIAHNVPLAEVVAWVTQVAPKGIIEFVPKEDETVRRMLAGREDIFSDYNEEAFASALSQKARVVNKHLIPGSKRTLYTFERSE.

Its function is as follows. Not known; does not seem to participate in nod factor synthesis but required for nodulation on some specific Medicago species such as M.littoralis. This is Nodulation protein NoeA (noeA) from Rhizobium meliloti (strain 1021) (Ensifer meliloti).